The chain runs to 229 residues: Large ribosomal subunit protein uL1c (229 aa).

It belongs to the universal ribosomal protein uL1 family. As to quaternary structure, part of the 50S ribosomal subunit.

It localises to the plastid. It is found in the chloroplast. Functionally, binds directly to 23S rRNA. Might be involved in E site tRNA release (Potential). The polypeptide is Large ribosomal subunit protein uL1c (rpl1) (Porphyra purpurea (Red seaweed)).